The chain runs to 513 residues: MKRLLLLFLFFITFSSAFPLVRMTENEENMQLAQAYLNQFYSLEIEGNHLVQSKNRSLIDDKIREMQAFFGLTVTGKLDSNTLEIMKTPRCGVPDVGQYGYTLPGWRKYNLTYRIINYTPDMARAAVDEAIQEGLEVWSKVTPLKFTKISKGIADIMIAFRTRVHGRCPRYFDGPLGVLGHAFPPGPGLGGDTHFDEDENWTKDGAGFNLFLVAAHEFGHALGLSHSNDQTALMFPNYVSLDPRKYPLSQDDINGIQSIYGGLPKEPAKPKEPTIPHACDPDLTFDAITTFRREVMFFKGRHLWRIYYDITDVEFELIASFWPSLPADLQAAYENPRDKILVFKDENFWMIRGYAVLPDYPKSIHTLGFPGRVKKIDAAVCDKTTRKTYFFVGIWCWRFDEMTQTMDKGFPQRVVKHFPGISIRVDAAFQYKGFFFFSRGSKQFEYDIKTKNITRIMRTNTWFQCKEPKNSSFGFDINKEKAHSGGIKILYHKSLSLFIFGIVHLLKNTSIYQ.

The N-terminal stretch at 1-17 (MKRLLLLFLFFITFSSA) is a signal peptide. Positions 18-98 (FPLVRMTENE…PRCGVPDVGQ (81 aa)) are cleaved as a propeptide — activation peptide. N55 carries N-linked (GlcNAc...) asparagine glycosylation. A Cysteine switch motif is present at residues 89–96 (PRCGVPDV). C91 is a Zn(2+) binding site. A glycan (N-linked (GlcNAc...) asparagine) is linked at N110. Ca(2+)-binding residues include D121 and D155. H165 is a binding site for Zn(2+). Residues D173, G174, and V178 each coordinate Ca(2+). H181 serves as a coordination point for Zn(2+). The Ca(2+) site is built by G188 and D192. Position 194 (H194) interacts with Zn(2+). Residues D196 and E199 each contribute to the Ca(2+) site. H216 is a binding site for Zn(2+). Residue E217 is part of the active site. Zn(2+)-binding residues include H220 and H226. Hemopexin repeat units lie at residues 276–325 (PHAC…WPSL), 326–371 (PADL…GFPG), 373–421 (VKKI…FPGI), and 422–465 (SIRV…WFQC). The cysteines at positions 279 and 465 are disulfide-linked. D286 is a binding site for Ca(2+). Residues D377 and D426 each coordinate Ca(2+). N452 is a glycosylation site (N-linked (GlcNAc...) asparagine). The segment at 466-513 (KEPKNSSFGFDINKEKAHSGGIKILYHKSLSLFIFGIVHLLKNTSIYQ) is required for retention in the endoplasmic reticulum.

It belongs to the peptidase M10A family. It depends on Ca(2+) as a cofactor. Zn(2+) is required as a cofactor. In terms of processing, N-glycosylated. Expressed in B-cells. Expressed in a subset of endometrial macrophages related to menstruation and in ovarian and peritoneal endometriotic lesions (at protein level).

The protein localises to the endoplasmic reticulum. In terms of biological role, matrix metalloproteinases degrade protein components of the extracellular matrix such as fibronectin, laminin, gelatins and/or collagens. In Homo sapiens (Human), this protein is Matrix metalloproteinase-27 (MMP27).